The chain runs to 192 residues: Protein GrpE (192 aa).

The interval 1-34 (MSSKEQKTPNEQVSEEMENTAEQQVEATQETGEC) is disordered. A compositionally biased stretch (polar residues) spans 20-31 (TAEQQVEATQET).

This sequence belongs to the GrpE family. In terms of assembly, homodimer.

It is found in the cytoplasm. Its function is as follows. Participates actively in the response to hyperosmotic and heat shock by preventing the aggregation of stress-denatured proteins, in association with DnaK and GrpE. It is the nucleotide exchange factor for DnaK and may function as a thermosensor. Unfolded proteins bind initially to DnaJ; upon interaction with the DnaJ-bound protein, DnaK hydrolyzes its bound ATP, resulting in the formation of a stable complex. GrpE releases ADP from DnaK; ATP binding to DnaK triggers the release of the substrate protein, thus completing the reaction cycle. Several rounds of ATP-dependent interactions between DnaJ, DnaK and GrpE are required for fully efficient folding. This is Protein GrpE from Yersinia pseudotuberculosis serotype I (strain IP32953).